Here is a 905-residue protein sequence, read N- to C-terminus: Protein translocase subunit SecA (905 aa).

ATP is bound by residues Gln89, 107–111 (GEGKT), and Asp502. The Zn(2+) site is built by Cys889, Cys891, Cys900, and His901.

This sequence belongs to the SecA family. As to quaternary structure, monomer and homodimer. Part of the essential Sec protein translocation apparatus which comprises SecA, SecYEG and auxiliary proteins SecDF-YajC and YidC. Requires Zn(2+) as cofactor.

Its subcellular location is the cell inner membrane. It is found in the cytoplasm. The catalysed reaction is ATP + H2O + cellular proteinSide 1 = ADP + phosphate + cellular proteinSide 2.. Functionally, part of the Sec protein translocase complex. Interacts with the SecYEG preprotein conducting channel. Has a central role in coupling the hydrolysis of ATP to the transfer of proteins into and across the cell membrane, serving both as a receptor for the preprotein-SecB complex and as an ATP-driven molecular motor driving the stepwise translocation of polypeptide chains across the membrane. This chain is Protein translocase subunit SecA, found in Bartonella tribocorum (strain CIP 105476 / IBS 506).